The chain runs to 137 residues: uncharacterized protein (137 aa).

This sequence to E.coli YfdK.

This is an uncharacterized protein from Escherichia coli (strain K12).